Here is a 1178-residue protein sequence, read N- to C-terminus: MSQRKFAGLRDNFNLLGEKNKILVANRGEIPIRIFRTAHELSMQTVAIYSHEDRLSTHKQKADEAYVIGEVGQYTPVGAYLAIDEIISIAQKHQVDFIHPGYGFLSENSEFADKVVKAGITWIGPPAEVIDSVGDKVSARNLAAKANVPTVPGTPGPIETVEEALDFVNEYGYPVIIKAAFGGGGRGMRVVREGDDVADAFQRATSEARTAFGNGTCFVERFLDKPKHIEVQLLADNHGNVVHLFERDCSVQRRHQKVVEVAPAKTLPREVRDAILTDAVKLAKECGYRNAGTAEFLVDNQNRHYFIEINPRIQVEHTITEEITGIDIVAAQIQIAAGASLPQLGLFQDKITTRGFAIQCRITTEDPAKNFQPDTGRIEVYRSAGGNGVRLDGGNAYAGTIISPHYDSMLVKCSCSGSTYEIVRRKMIRALIEFRIRGVKTNIPFLLTLLTNPVFIEGTYWTTFIDDTPQLFQMVSSQNRAQKLLHYLADVAVNGSSIKGQIGLPKLKSNPSVPHLHDAQGNVINVTKSAPPSGWRQVLLEKGPAEFARQVRQFNGTLLMDTTWRDAHQSLLATRVRTHDLATIAPTTAHALAGRFALECWGGATFDVAMRFLHEDPWERLRKLRSLVPNIPFQMLLRGANGVAYSSLPDNAIDHFVKQAKDNGVDIFRVFDALNDLEQLKVGVDAVKKAGGVVEATVCFSGDMLQPGKKYNLDYYLEIAEKIVQMGTHILGIKDMAGTMKPAAAKLLIGSLRAKYPDLPIHVHTHDSAGTAVASMTACALAGADVVDVAINSMSGLTSQPSINALLASLEGNIDTGINVEHVRELDAYWAEMRLLYSCFEADLKGPDPEVYQHEIPGGQLTNLLFQAQQLGLGEQWAETKRAYREANYLLGDIVKVTPTSKVVGDLAQFMVSNKLTSDDVRRLANSLDFPDSVMDFFEGLIGQPYGGFPEPFRSDVLRNKRRKLTCRPGLELEPFDLEKIREDLQNRFGDVDECDVASYNMYPRVYEDFQKMRETYGDLSVLPTRSFLSPLETDEEIEVVIEQGKTLIIKLQAVGDLNKKTGEREVYFDLNGEMRKIRVADRSQKVETVTKSKADMHDPLHIGAPMAGVIVEVKVHKGSLIKKGQPVAVLSAMKMEMIISSPSDGQVKEVFVSDGENVDSSDLLVLLEDQVPVETKA.

The region spanning 18 to 470 (EKNKILVANR…WTTFIDDTPQ (453 aa)) is the Biotin carboxylation domain. Lysine 136, glutamate 220, and histidine 255 together coordinate ATP. In terms of domain architecture, ATP-grasp spans 140 to 337 (RNLAAKANVP…IVAAQIQIAA (198 aa)). Residue arginine 312 is part of the active site. The region spanning 557–824 (TLLMDTTWRD…DTGINVEHVR (268 aa)) is the Pyruvate carboxyltransferase domain. Substrate contacts are provided by residues 565–569 (RDAHQ) and arginine 638. A divalent metal cation is bound at residue aspartate 566. A divalent metal cation is bound by residues lysine 734, histidine 764, and histidine 766. An N6-carboxylysine modification is found at lysine 734. Threonine 898 contacts substrate. The Biotinyl-binding domain occupies 1094 to 1169 (KADMHDPLHI…DSSDLLVLLE (76 aa)). Lysine 1135 carries the post-translational modification N6-biotinyllysine.

As to quaternary structure, homotetramer. The cofactor is biotin. Zn(2+) serves as cofactor.

Its subcellular location is the cytoplasm. It carries out the reaction hydrogencarbonate + pyruvate + ATP = oxaloacetate + ADP + phosphate + H(+). It functions in the pathway carbohydrate biosynthesis; gluconeogenesis. Functionally, pyruvate carboxylase catalyzes a 2-step reaction, involving the ATP-dependent carboxylation of the covalently attached biotin in the first step and the transfer of the carboxyl group to pyruvate in the second. The sequence is that of Pyruvate carboxylase 1 (PYC1) from Saccharomyces cerevisiae (strain ATCC 204508 / S288c) (Baker's yeast).